The primary structure comprises 343 residues: Ribosomal RNA-processing protein 8 (343 aa).

The tract at residues 1–123 (MGKKRKITDE…NDDVAAAPEE (123 aa)) is disordered. Over residues 7–33 (ITDEKDAQHVPAEKREKVENWLKKSTE) the composition is skewed to basic and acidic residues. 2 stretches are compositionally biased toward basic residues: residues 45 to 59 (KKKR…KLAA) and 89 to 101 (KKKR…KKKF). Residues 112 to 123 (TENDDVAAAPEE) are compositionally biased toward acidic residues. S-adenosyl-L-methionine-binding residues include His169, Gly204, Asp224, Asp236, Met237, and Cys253.

Belongs to the methyltransferase superfamily. RRP8 family.

The protein resides in the nucleus. It localises to the nucleolus. Its function is as follows. Probable methyltransferase required to silence rDNA. Involved in regulation of antisense ribosomal siRNA production. Required for the N1-methyladenosine modification of 26S rRNAs. This chain is Ribosomal RNA-processing protein 8 (rrp-8), found in Caenorhabditis elegans.